A 444-amino-acid polypeptide reads, in one-letter code: Trigger factor (444 aa).

One can recognise a PPIase FKBP-type domain in the interval 166–251; that stretch reads GDQIVIDFKG…VKAVKAPKPA (86 aa).

This sequence belongs to the FKBP-type PPIase family. Tig subfamily.

The protein localises to the cytoplasm. It catalyses the reaction [protein]-peptidylproline (omega=180) = [protein]-peptidylproline (omega=0). Involved in protein export. Acts as a chaperone by maintaining the newly synthesized protein in an open conformation. Functions as a peptidyl-prolyl cis-trans isomerase. The sequence is that of Trigger factor from Cereibacter sphaeroides (strain ATCC 17025 / ATH 2.4.3) (Rhodobacter sphaeroides).